The sequence spans 517 residues: Gallate 1-beta-glucosyltransferase 84A24 (517 aa).

The active-site Proton acceptor is the His-19. His-19 contacts an anthocyanidin. UDP-alpha-D-glucose contacts are provided by Gln-344, His-359, Trp-362, Asn-363, Ser-364, and Glu-367. Gly-382 is a binding site for an anthocyanidin. UDP-alpha-D-glucose-binding residues include Asp-383 and Gln-384.

Belongs to the UDP-glycosyltransferase family. Highly expressed in leaf. Also expressed in peel, stem, root and aril.

The protein resides in the cytoplasm. It catalyses the reaction 3,4,5-trihydroxybenzoate + UDP-alpha-D-glucose = 1-O-galloyl-beta-D-glucose + UDP. The enzyme catalyses 3,4-dihydroxybenzoate + UDP-alpha-D-glucose = 1-O-(3,4-dihydroxy-benzoyl)-beta-D-glucose + UDP. It carries out the reaction 4-hydroxybenzoate + UDP-alpha-D-glucose = 4-(beta-D-glucosyloxy)benzoate + UDP + H(+). The catalysed reaction is (E)-cinnamate + UDP-alpha-D-glucose = 1-O-(trans-cinnamoyl)-beta-D-glucose + UDP. It catalyses the reaction (E)-sinapate + UDP-alpha-D-glucose = 1-O-(trans-sinapoyl)-beta-D-glucose + UDP. The enzyme catalyses (E)-4-coumarate + UDP-alpha-D-glucose = 1-O-(trans-4-coumaroyl)-beta-D-glucose + UDP. It carries out the reaction (E)-caffeate + UDP-alpha-D-glucose = 1-O-[(E)-caffeoyl]-beta-D-glucose + UDP. The catalysed reaction is (E)-ferulate + UDP-alpha-D-glucose = 1-O-[(E)-feruloyl]-beta-D-glucose + UDP. It catalyses the reaction genistein + UDP-alpha-D-glucose = genistein 7-O-beta-D-glucoside + UDP + H(+). The enzyme catalyses apigenin + UDP-alpha-D-glucose = apigenin 7-O-beta-D-glucoside + UDP + H(+). It carries out the reaction luteolin + UDP-alpha-D-glucose = luteolin 7-O-beta-D-glucoside + UDP + H(+). Glucosyltransferase that catalyzes the formation of 1-O-beta-D-glucose esters with hydroxybenzoic acids and cinnamic acid including its derivatives as preferred glucosyl acceptors. Has significant activity with gallic acid (3,4,5-trihydroxybenzoic acid), 3,4-dihydroxybenzoic acid, 4-hydroxybenzoic acid, cinnamic acid, sinapic acid, coumaric acid, caffeic acid and ferulic acid in vitro. Gallic acid is the predicted native substrate of the enzyme, which thus catalyzes the formation of 1-O-galloyl-beta-D-glucose, the first committed step of hydrolyzable tannins (HTs) biosynthesis, with punicalagin isomers being the major HTs of pomegranate. Catalyzes the formation of flavonoid glucosides with genistein, apigenin and luteolin in vitro. Has low activity with benzoic acid, 2-hydroxybenzoic acid, 3-hydroxybenzoic acid, 2,4-dihydroxybenzoic acid, naringenin and quercetin. No activity with catechol, resveratrol, chlorogenic acid, catechin and epicatechin (building blocks of proanthocyanidins) or cyanidin, delphinidin and pelargonidin (the three anthocyanidins). This chain is Gallate 1-beta-glucosyltransferase 84A24, found in Punica granatum (Pomegranate).